A 292-amino-acid chain; its full sequence is NAD kinase (292 aa).

D74 serves as the catalytic Proton acceptor. NAD(+)-binding positions include 74 to 75, 147 to 148, D177, and 188 to 193; these read DG, NE, and TGYSLS.

This sequence belongs to the NAD kinase family. Requires a divalent metal cation as cofactor.

The protein resides in the cytoplasm. The enzyme catalyses NAD(+) + ATP = ADP + NADP(+) + H(+). Its function is as follows. Involved in the regulation of the intracellular balance of NAD and NADP, and is a key enzyme in the biosynthesis of NADP. Catalyzes specifically the phosphorylation on 2'-hydroxyl of the adenosine moiety of NAD to yield NADP. The chain is NAD kinase from Cytophaga hutchinsonii (strain ATCC 33406 / DSM 1761 / CIP 103989 / NBRC 15051 / NCIMB 9469 / D465).